Reading from the N-terminus, the 296-residue chain is Phosphoribosylaminoimidazole-succinocarboxamide synthase (296 aa).

This sequence belongs to the SAICAR synthetase family.

The enzyme catalyses 5-amino-1-(5-phospho-D-ribosyl)imidazole-4-carboxylate + L-aspartate + ATP = (2S)-2-[5-amino-1-(5-phospho-beta-D-ribosyl)imidazole-4-carboxamido]succinate + ADP + phosphate + 2 H(+). It participates in purine metabolism; IMP biosynthesis via de novo pathway; 5-amino-1-(5-phospho-D-ribosyl)imidazole-4-carboxamide from 5-amino-1-(5-phospho-D-ribosyl)imidazole-4-carboxylate: step 1/2. The chain is Phosphoribosylaminoimidazole-succinocarboxamide synthase from Geobacter sp. (strain M21).